The following is a 100-amino-acid chain: Aspartyl/glutamyl-tRNA(Asn/Gln) amidotransferase subunit C (100 aa).

This sequence belongs to the GatC family. As to quaternary structure, heterotrimer of A, B and C subunits.

It catalyses the reaction L-glutamyl-tRNA(Gln) + L-glutamine + ATP + H2O = L-glutaminyl-tRNA(Gln) + L-glutamate + ADP + phosphate + H(+). It carries out the reaction L-aspartyl-tRNA(Asn) + L-glutamine + ATP + H2O = L-asparaginyl-tRNA(Asn) + L-glutamate + ADP + phosphate + 2 H(+). Functionally, allows the formation of correctly charged Asn-tRNA(Asn) or Gln-tRNA(Gln) through the transamidation of misacylated Asp-tRNA(Asn) or Glu-tRNA(Gln) in organisms which lack either or both of asparaginyl-tRNA or glutaminyl-tRNA synthetases. The reaction takes place in the presence of glutamine and ATP through an activated phospho-Asp-tRNA(Asn) or phospho-Glu-tRNA(Gln). This is Aspartyl/glutamyl-tRNA(Asn/Gln) amidotransferase subunit C from Staphylococcus saprophyticus subsp. saprophyticus (strain ATCC 15305 / DSM 20229 / NCIMB 8711 / NCTC 7292 / S-41).